The primary structure comprises 194 residues: Potassium-transporting ATPase KdpC subunit (194 aa).

A helical membrane pass occupies residues 12 to 34; the sequence is LFLLLLTGGVYPLLTTALGQWWF.

It belongs to the KdpC family. The system is composed of three essential subunits: KdpA, KdpB and KdpC.

The protein localises to the cell inner membrane. Its function is as follows. Part of the high-affinity ATP-driven potassium transport (or Kdp) system, which catalyzes the hydrolysis of ATP coupled with the electrogenic transport of potassium into the cytoplasm. This subunit acts as a catalytic chaperone that increases the ATP-binding affinity of the ATP-hydrolyzing subunit KdpB by the formation of a transient KdpB/KdpC/ATP ternary complex. In Salmonella enteritidis PT4 (strain P125109), this protein is Potassium-transporting ATPase KdpC subunit.